Here is a 228-residue protein sequence, read N- to C-terminus: MKYTNIREGQFLSRPNRFIAKVEIDGKEEICHVKNTGRCRELLIPGVTVFLQEADFEHRKTKYDLIGVRKGNRLINMDSQVPNKVFREWLEKGYFQELQHIKQEQTFRNSRFDFYLEAGQRKIFVEVKGVTLEEEGVALFPDAPTERGVKHLRELSQAVAAGYEAYVVFIIQMKDIHYFTPNIKTHQAFGDSLIQAEKQGVKILALDCEVTEDSIEAGDFVTVKLVEG.

The protein belongs to the SfsA family.

This chain is Sugar fermentation stimulation protein homolog, found in Desulfitobacterium hafniense (strain DSM 10664 / DCB-2).